The chain runs to 147 residues: Anti-sigma F factor (147 aa).

The protein belongs to the anti-sigma-factor family.

The enzyme catalyses L-seryl-[protein] + ATP = O-phospho-L-seryl-[protein] + ADP + H(+). It carries out the reaction L-threonyl-[protein] + ATP = O-phospho-L-threonyl-[protein] + ADP + H(+). In terms of biological role, binds to sigma F and blocks its ability to form an RNA polymerase holoenzyme (E-sigma F). Phosphorylates SpoIIAA on a serine residue. This phosphorylation may enable SpoIIAA to act as an anti-anti-sigma factor that counteracts SpoIIAB and thus releases sigma F from inhibition. This Heyndrickxia coagulans (Weizmannia coagulans) protein is Anti-sigma F factor.